Here is a 638-residue protein sequence, read N- to C-terminus: 1-deoxy-D-xylulose-5-phosphate synthase (638 aa).

Residues histidine 79 and glycine 120–serine 122 each bind thiamine diphosphate. Aspartate 151 contacts Mg(2+). Thiamine diphosphate is bound by residues glycine 152 to alanine 153, asparagine 182, tyrosine 291, and glutamate 373. A Mg(2+)-binding site is contributed by asparagine 182.

Belongs to the transketolase family. DXPS subfamily. In terms of assembly, homodimer. Requires Mg(2+) as cofactor. It depends on thiamine diphosphate as a cofactor.

The catalysed reaction is D-glyceraldehyde 3-phosphate + pyruvate + H(+) = 1-deoxy-D-xylulose 5-phosphate + CO2. The protein operates within metabolic intermediate biosynthesis; 1-deoxy-D-xylulose 5-phosphate biosynthesis; 1-deoxy-D-xylulose 5-phosphate from D-glyceraldehyde 3-phosphate and pyruvate: step 1/1. Its function is as follows. Catalyzes the acyloin condensation reaction between C atoms 2 and 3 of pyruvate and glyceraldehyde 3-phosphate to yield 1-deoxy-D-xylulose-5-phosphate (DXP). The sequence is that of 1-deoxy-D-xylulose-5-phosphate synthase from Xanthomonas euvesicatoria pv. vesicatoria (strain 85-10) (Xanthomonas campestris pv. vesicatoria).